The sequence spans 151 residues: Prefoldin subunit 5 (151 aa).

Residues isoleucine 15 to serine 35 are a coiled coil.

Belongs to the prefoldin subunit alpha family. Heterohexamer of two PFD-alpha type and four PFD-beta type subunits forming prefoldin co-chaperone complex. Interacts with PFD6. Binds to the DELLA protein GAI.

It is found in the cytoplasm. It localises to the nucleus. Binds specifically to cytosolic chaperonin (c-CPN) and transfers target proteins to it. Binds to nascent polypeptide chain and promotes folding in an environment in which there are many competing pathways for nonnative proteins. Together with other chaperonins, contribute to the regulation of gene expression by modulating the spliceosome function on pre-mRNA splicing post-transcriptionally by acting as a co-chaperone of Hsp90 to control levels of LSM8. Required for the biogenesis of tubulins and for subsequent microtubules (MTs) organization and dynamicity. Necessary for tolerance to NaCl salt stress. Involved in the process leading to microtubules dissociation in response to gibberellic acid (GA) probably due to the DELLA proteins-mediated translocation of the prefoldin co-chaperone complex from the cytoplasm to the nucleus. Prevents cold acclimation (e.g. 7 days at 4 degrees Celsius) in a DELLA proteins-dependent manner by promoting nuclear proteasome-mediated HY5 degradation, thus modulating the expression of several genes and reducing anthocyanin biosynthesis, but seems not involved in constitutive freezing tolerance. Contributes to the GA-dependent regulation of PIN2 trafficking at the plasma membrane, thus influencing auxin flux. The protein is Prefoldin subunit 5 of Arabidopsis thaliana (Mouse-ear cress).